A 157-amino-acid polypeptide reads, in one-letter code: Glutamyl-tRNA(Gln) amidotransferase subunit C, mitochondrial (157 aa).

It belongs to the GatC family. As to quaternary structure, subunit of the heterotrimeric GatCAB amidotransferase (AdT) complex, composed of A, B and C subunits.

It localises to the mitochondrion. The enzyme catalyses L-glutamyl-tRNA(Gln) + L-glutamine + ATP + H2O = L-glutaminyl-tRNA(Gln) + L-glutamate + ADP + phosphate + H(+). Functionally, allows the formation of correctly charged Gln-tRNA(Gln) through the transamidation of misacylated Glu-tRNA(Gln) in the mitochondria. The reaction takes place in the presence of glutamine and ATP through an activated gamma-phospho-Glu-tRNA(Gln). In Drosophila virilis (Fruit fly), this protein is Glutamyl-tRNA(Gln) amidotransferase subunit C, mitochondrial.